Here is a 370-residue protein sequence, read N- to C-terminus: Vasopressin V2 receptor (370 aa).

Residues 1–10 show a composition bias toward polar residues; it reads MLLASTTSAV. Residues 1 to 26 form a disordered region; it reads MLLASTTSAVPRTLSPPTPAGNGSRE. Over 1–37 the chain is Extracellular; sequence MLLASTTSAVPRTLSPPTPAGNGSRELLDTRDPLLVQ. Asn-22 carries N-linked (GlcNAc...) asparagine glycosylation. A helical membrane pass occupies residues 38 to 62; that stretch reads AELALLSTVFVAVALSNGLVLGALA. Residues 63 to 76 lie on the Cytoplasmic side of the membrane; it reads RRVRRGRWAPMHVF. Residues 77–97 form a helical membrane-spanning segment; sequence IGHLCLADLAVALFQVLPQLA. Residues 98-112 lie on the Extracellular side of the membrane; the sequence is WDATDRFRGPDALCR. Residues 113-134 traverse the membrane as a helical segment; that stretch reads AVKYLQMVGMYASSYMILAMTL. The Cytoplasmic portion of the chain corresponds to 135 to 158; the sequence is DRHRAICRPMLAYRHGGGARWNRP. A helical membrane pass occupies residues 159–179; that stretch reads VLVAWAFSLILSLPQLFIFAQ. Residues 180 to 199 lie on the Extracellular side of the membrane; sequence RDVGNGSGVLDCWAHFAEPW. The helical transmembrane segment at 200 to 219 threads the bilayer; sequence GLRAYVTWIALMVFVAPALG. Residues 220-270 lie on the Cytoplasmic side of the membrane; the sequence is IAACQVLIFREIHSSLVPGPAERAGGCRGGHRTGSPSEGARVSAAMAKTVR. The chain crosses the membrane as a helical span at residues 271–292; it reads MTLVIVIVYVLCWAPFFLVQLW. The Extracellular portion of the chain corresponds to 293–307; that stretch reads AAWDPQAPLEGAPFV. The chain crosses the membrane as a helical span at residues 308 to 327; that stretch reads LLMLLASLNSCTNPWIYAFF. Residues 328–370 are Cytoplasmic-facing; the sequence is SSSVSSELRSLFCWARSRAPPSLGPQEESCATASSFLAKDTSS. Residue Cys-340 is the site of S-palmitoyl cysteine attachment.

Belongs to the G-protein coupled receptor 1 family. Vasopressin/oxytocin receptor subfamily. As to quaternary structure, interacts with ARRDC4. Identified in a complex containing at least ARRDC4, V2R and HGS. Interacts with TMEM147.

It localises to the cell membrane. In terms of biological role, receptor for arginine vasopressin. The activity of this receptor is mediated by G proteins which activate adenylate cyclase. Involved in renal water reabsorption. In Canis lupus familiaris (Dog), this protein is Vasopressin V2 receptor (AVPR2).